Reading from the N-terminus, the 1042-residue chain is Sarcoplasmic/endoplasmic reticulum calcium ATPase 2 (1042 aa).

The Cytoplasmic portion of the chain corresponds to 1–48 (MENAHTKTVEEVLGHFGVNESTGLSLEQVKKLKERWGSNELPAEEGKT). At Ser-38 the chain carries Phosphoserine. A helical transmembrane segment spans residues 49-69 (LLELVIEQFEDLLVRILLLAA). The Lumenal portion of the chain corresponds to 70–89 (CISFVLAWFEEGEETITAFV). A helical membrane pass occupies residues 90–110 (EPFVILLILVANAIVGVWQER). Over 111–253 (NAENAIEALK…QERTPLQQKL (143 aa)) the chain is Cytoplasmic. A helical transmembrane segment spans residues 254 to 273 (DEFGEQLSKVISLICIAVWI). Over 274 to 295 (INIGHFNDPVHGGSWIRGAIYY) the chain is Lumenal. Residues Tyr-294 and Tyr-295 each carry the 3'-nitrotyrosine modification. A helical membrane pass occupies residues 296 to 313 (FKIAVALAVAAIPEGLPA). Ca(2+) contacts are provided by Val-304, Ala-305, Ile-307, and Glu-309. At 314-756 (VITTCLALGT…EEGRAIYNNM (443 aa)) the chain is on the cytoplasmic side. Catalysis depends on Asp-351, which acts as the 4-aspartylphosphate intermediate. Positions 351 and 353 each coordinate Mg(2+). Thr-353 contributes to the ATP binding site. Thr-441 carries the post-translational modification Phosphothreonine. ATP-binding residues include Glu-442, Arg-489, and Lys-514. Ser-531 is modified (phosphoserine). Arg-559 contacts ATP. The interaction with HAX1 stretch occupies residues 575–594 (MHLKDSANFIKYETNLTFVG). Ser-580 carries the phosphoserine modification. Residues Thr-624, Gly-625, and Asp-626 each coordinate ATP. Residue Ser-663 is modified to Phosphoserine. The ATP site is built by Arg-677 and Lys-683. Asp-702 is a Mg(2+) binding site. Asn-705 lines the ATP pocket. The helical transmembrane segment at 757–776 (KQFIRYLISSNVGEVVCIFL) threads the bilayer. Ca(2+) is bound by residues Asn-767 and Glu-770. The Lumenal segment spans residues 777 to 786 (TAALGFPEAL). The helical transmembrane segment at 787 to 807 (IPVQLLWVNLVTDGLPATALG) threads the bilayer. Residues 787-807 (IPVQLLWVNLVTDGLPATALG) are interaction with PLN. The tract at residues 788–1042 (PVQLLWVNLV…DTNFSDLLWS (255 aa)) is interaction with TMEM64 and PDIA3. 3 residues coordinate Ca(2+): Asn-795, Thr-798, and Asp-799. Residues 808 to 827 (FNPPDLDIMNKPPRNPKEPL) lie on the Cytoplasmic side of the membrane. A helical transmembrane segment spans residues 828-850 (ISGWLFFRYLAIGCYVGAATVGA). The Lumenal portion of the chain corresponds to 851 to 896 (AAWWFIAADGGPRVSFYQLSHFLQCKEDNPDFEGVDCAIFESPYPM). The cysteines at positions 875 and 887 are disulfide-linked. A helical membrane pass occupies residues 897–916 (TMALSVLVTIEMCNALNSLS). A Ca(2+)-binding site is contributed by Glu-907. Residues 917–929 (ENQSLLRMPPWEN) lie on the Cytoplasmic side of the membrane. The helical transmembrane segment at 930-948 (IWLVGSICLSMSLHFLILY) threads the bilayer. The interaction with PLN stretch occupies residues 931-942 (WLVGSICLSMSL). Residues 949 to 963 (VEPLPLIFQITPLNV) are Lumenal-facing. Residues 964–984 (TQWLMVLKISLPVILMDETLK) traverse the membrane as a helical segment. Residues 985 to 1042 (FVARNYLEPGKECVQPAPQSCSLWACTEGVSWPFVLLIVPLVMWVYSTDTNFSDLLWS) are Cytoplasmic-facing.

Belongs to the cation transport ATPase (P-type) (TC 3.A.3) family. Type IIA subfamily. Interacts with sarcolipin (SLN); the interaction inhibits ATP2A2 Ca(2+) affinity. Interacts with phospholamban (PLN); the interaction inhibits ATP2A2 Ca(2+) affinity. Interacts with myoregulin (MRLN). Interacts with ARLN and ERLN; the interactions inhibit ATP2A2 Ca(2+) affinity. Interacts with SRTIT1/DWORF; the interaction results in activation of ATP2A2. Interacts with the monomeric forms of SLN, PLN, ARLN, ERLN and STRI1/DWORF. Interacts with HAX1. Interacts with S100A8 and S100A9. Interacts with SLC35G1 and STIM1. Interacts with TMEM203. Interacts with TMEM64 and PDIA3. Interacts with TMX1. Interacts with TMX2. Interacts with VMP1; VMP1 competes with PLN and SLN to prevent them from forming an inhibitory complex with ATP2A2. Interacts with ULK1. Interacts with TUNAR. Interacts with FLVCR2; this interaction occurs in the absence of heme and promotes ATP2A2 proteasomal degradation; this complex is dissociated upon heme binding. Interacts with FNIP1. As to quaternary structure, interacts with TRAM2 (via C-terminus). Mg(2+) serves as cofactor. Nitrated under oxidative stress. Nitration on the two tyrosine residues inhibits catalytic activity. Post-translationally, serotonylated on Gln residues by TGM2 in response to hypoxia, leading to its inactivation. As to expression, isoform 2 is highly expressed in heart and slow twitch skeletal muscle. Isoform 1 is widely expressed.

It is found in the endoplasmic reticulum membrane. The protein resides in the sarcoplasmic reticulum membrane. It catalyses the reaction Ca(2+)(in) + ATP + H2O = Ca(2+)(out) + ADP + phosphate + H(+). With respect to regulation, has different conformational states with differential Ca2+ affinity. The E1 conformational state (active form) shows high Ca(2+) affinity, while the E2 state exhibits low Ca(2+) affinity. Binding of ATP allosterically increases its affinity for subsequent binding of Ca2+. Reversibly inhibited by phospholamban (PLN) at low calcium concentrations. PLN inhibits ATP2A2 Ca(2+) affinity by disrupting its allosteric activation by ATP. Inhibited by sarcolipin (SLN) and myoregulin (MRLN). The inhibition is blocked by VMP1. Enhanced by STRIT1/DWORF; STRIT1 increases activity by displacing sarcolipin (SLN), phospholamban (PLN) and myoregulin (MRLN). Stabilizes SERCA2 in its E2 state. In terms of biological role, this magnesium-dependent enzyme catalyzes the hydrolysis of ATP coupled with the translocation of calcium from the cytosol to the sarcoplasmic reticulum lumen. Involved in autophagy in response to starvation. Upon interaction with VMP1 and activation, controls ER-isolation membrane contacts for autophagosome formation. Also modulates ER contacts with lipid droplets, mitochondria and endosomes. In coordination with FLVCR2 mediates heme-stimulated switching from mitochondrial ATP synthesis to thermogenesis. Functionally, involved in the regulation of the contraction/relaxation cycle. Acts as a regulator of TNFSF11-mediated Ca(2+) signaling pathways via its interaction with TMEM64 which is critical for the TNFSF11-induced CREB1 activation and mitochondrial ROS generation necessary for proper osteoclast generation. Association between TMEM64 and SERCA2 in the ER leads to cytosolic Ca(2+) spiking for activation of NFATC1 and production of mitochondrial ROS, thereby triggering Ca(2+) signaling cascades that promote osteoclast differentiation and activation. This chain is Sarcoplasmic/endoplasmic reticulum calcium ATPase 2 (ATP2A2), found in Oryctolagus cuniculus (Rabbit).